We begin with the raw amino-acid sequence, 375 residues long: Outer membrane porin C (375 aa).

The first 21 residues, 1 to 21 (MKVKVLSLLVPALLVAGAANA), serve as a signal peptide directing secretion. A beta stranded transmembrane segment spans residues 22–27 (AEVYNK). Over 28-29 (DG) the chain is Periplasmic. Residues 30-44 (NKLDLYGKVDGLHYF) traverse the membrane as a beta stranded segment. Residues 45 to 50 (SDDKSV) are Extracellular-facing. The beta stranded transmembrane segment at 51-66 (DGDQTYMRLGFKGETQ) threads the bilayer. Residues 67 to 70 (VTDQ) are Periplasmic-facing. Residues 71-82 (LTGYGQWEYQIQ) traverse the membrane as a beta stranded segment. Over 83-91 (GNAPESENN) the chain is Extracellular. The beta stranded transmembrane segment at 92–103 (SWTRVAFAGLKF) threads the bilayer. The Periplasmic segment spans residues 104 to 105 (QD). The chain crosses the membrane as a beta stranded span at residues 106-113 (IGSFDYGR). Residues 114–146 (NYGVVYDVTSWTDVLPEFGGDTYGSDNFMQQRG) lie on the Extracellular side of the membrane. A beta stranded membrane pass occupies residues 147–156 (NGFATYRNTD). Topologically, residues 157 to 163 (FFGLVDG) are periplasmic. A beta stranded membrane pass occupies residues 164-172 (LNFAVQYQG). Over 173–201 (QNGSVSGENDPDFTGHGITNNGRKALRQN) the chain is Extracellular. A beta stranded membrane pass occupies residues 202 to 212 (GDGVGGSITYD). Over 213-215 (YEG) the chain is Periplasmic. The chain crosses the membrane as a beta stranded span at residues 216–226 (FGVGAAVSSSK). At 227–241 (RTWDQNNTGLIGTGD) the chain is on the extracellular side. A beta stranded transmembrane segment spans residues 242 to 254 (RAETYTGGLKYDA). Over 255–256 (NN) the chain is Periplasmic. Residues 257-267 (IYLAAQYTQTY) form a beta stranded membrane-spanning segment. The Extracellular portion of the chain corresponds to 268–279 (NATRVGSLGWAN). The chain crosses the membrane as a beta stranded span at residues 280–292 (KAQNFEAVAQYQF). Topologically, residues 293-294 (DF) are periplasmic. Residues 295-309 (GLRPSVAYLQSKGKN) traverse the membrane as a beta stranded segment. Residues 310-320 (LGVVAGRNYDD) are Extracellular-facing. The chain crosses the membrane as a beta stranded span at residues 321–335 (EDILKYVDVGATYYF). Topologically, residues 336–338 (NKN) are periplasmic. A beta stranded transmembrane segment spans residues 339 to 348 (MSTYVDYKIN). Residues 349–364 (LLDDNQFTRAAGINTD) lie on the Extracellular side of the membrane. A beta stranded transmembrane segment spans residues 365–375 (DIVALGLVYQF).

Belongs to the Gram-negative porin family. Homotrimer. Forms mixed heterotrimers with OmpF; other mixed heterotrimers are also probable. The N- and C-termini are two parts of the same strand. Extracellular loop 3 folds back into the lumen of the barrel forming a constriction zone that controls the pore size, while the trimer interface is formed by the packing of hydrophobic residues on the outer edges of beta strands 1 to 5 and further stabilized by extracellular loop 2 which reaches into the neighboring monomer.

It is found in the cell outer membrane. Functionally, forms pores that allow passive diffusion of small molecules across the outer membrane, including some antibiotics. Variation of the residues in the constriction zone modifies the transverse electric field in the zone, altering antibiotic resistance. (Microbial infection) Is not susceptible to CdiA-EC536-mediated toxicity, which uses OmpC-OmpF heterotrimers of some strains as its outer membrane receptor. Mutagenesis of extracellular loops L4 or L5 of this protein confers susceptibility to the toxin. The protein is Outer membrane porin C (ompC) of Escherichia coli O6:H1 (strain CFT073 / ATCC 700928 / UPEC).